The following is an 853-amino-acid chain: Envelope glycoprotein gp160 (853 aa).

The signal sequence occupies residues 1-31 (MRVRGIERNCQNLWKWGIMLLGILMTCSNAD). The Extracellular portion of the chain corresponds to 32 to 681 (NLWVTVYYGV…ITQWLWYIKI (650 aa)). A disulfide bond links Cys-53 and Cys-73. Asn-87, Asn-137, Asn-144, Asn-153, Asn-157, Asn-185, Asn-188, Asn-198, Asn-235, Asn-242, Asn-263, Asn-277, Asn-290, and Asn-296 each carry an N-linked (GlcNAc...) asparagine; by host glycan. 5 disulfide bridges follow: Cys-118–Cys-206, Cys-125–Cys-197, Cys-130–Cys-154, Cys-219–Cys-248, and Cys-229–Cys-240. Residues 130 to 153 (CIDEVMENVTMKNNNVTEEIRMKN) are V1. The tract at residues 154–197 (CSFNITTVVRDKTKQVHALFYRLDIVPIDNDNSTNSTNYRLINC) is V2. The interval 297 to 329 (CTRPYRNIRQRTSIGLGQALYTTKTRSIIGQAY) is V3. Cys-297 and Cys-330 form a disulfide bridge. Residues Asn-331, Asn-338, and Asn-353 are each glycosylated (N-linked (GlcNAc...) asparagine; by host). The interval 362-372 (SSGGDPEITTH) is CD4-binding loop. Intrachain disulfides connect Cys-376/Cys-442 and Cys-383/Cys-415. The segment at 383-415 (CNTSGLFNSTWDISKSEWANSTESDDKPITLQC) is V4. N-linked (GlcNAc...) asparagine; by host glycosylation is found at Asn-384, Asn-390, Asn-402, Asn-441, Asn-445, Asn-458, Asn-459, and Asn-462. V5 regions lie at residues 457-468 (TNNSSNETFRPG) and 460-468 (SSNETFRPG). Residues 509 to 529 (AIGLGAMFLGFLGAAGSTMGA) form a fusion peptide region. The immunosuppression stretch occupies residues 571 to 589 (KQLQARILAVERYLKDQQL). Cys-595 and Cys-601 are oxidised to a cystine. N-linked (GlcNAc...) asparagine; by host glycans are attached at residues Asn-608, Asn-613, Asn-622, Asn-634, and Asn-671. Residues 630–664 (REIDNYTGLIYRLIEESQTQQEKNEQELLELDKWA) are a coiled coil. An MPER; binding to GalCer region spans residues 659 to 680 (ELDKWASLWNWFNITQWLWYIK). A helical membrane pass occupies residues 682–702 (FIMIVGGLIGLRIVFAVLSLV). Residues 703-853 (NRVRQGYSPL…IRQGLERLLL (151 aa)) are Cytoplasmic-facing. Residues 709–712 (YSPL) carry the YXXL motif; contains endocytosis signal motif. 2 S-palmitoyl cysteine; by host lipidation sites follow: Cys-761 and Cys-834. Positions 852-853 (LL) match the Di-leucine internalization motif motif.

It belongs to the HIV-1 env protein family. In terms of assembly, the mature envelope protein (Env) consists of a homotrimer of non-covalently associated gp120-gp41 heterodimers. The resulting complex protrudes from the virus surface as a spike. There seems to be as few as 10 spikes on the average virion. Interacts with host CD4, CCR5 and CXCR4. Gp120 also interacts with the C-type lectins CD209/DC-SIGN and CLEC4M/DC-SIGNR (collectively referred to as DC-SIGN(R)). Gp120 and gp41 interact with GalCer. Gp120 interacts with host ITGA4/ITGB7 complex; on CD4+ T-cells, this interaction results in rapid activation of integrin ITGAL/LFA-1, which facilitates efficient cell-to-cell spreading of HIV-1. Gp120 interacts with cell-associated heparan sulfate; this interaction increases virus infectivity on permissive cells and may be involved in infection of CD4- cells. The mature envelope protein (Env) consists of a homotrimer of non-covalently associated gp120-gp41 heterodimers. The resulting complex protrudes from the virus surface as a spike. There seems to be as few as 10 spikes on the average virion. Highly glycosylated by host. The high number of glycan on the protein is reffered to as 'glycan shield' because it contributes to hide protein sequence from adaptive immune system. In terms of processing, palmitoylation of the transmembrane protein and of Env polyprotein (prior to its proteolytic cleavage) is essential for their association with host cell membrane lipid rafts. Palmitoylation is therefore required for envelope trafficking to classical lipid rafts, but not for viral replication. Post-translationally, specific enzymatic cleavages in vivo yield mature proteins. Envelope glycoproteins are synthesized as an inactive precursor that is heavily N-glycosylated and processed likely by host cell furin in the Golgi to yield the mature SU and TM proteins. The cleavage site between SU and TM requires the minimal sequence [KR]-X-[KR]-R. About 2 of the 9 disulfide bonds of gp41 are reduced by P4HB/PDI, following binding to CD4 receptor.

Its subcellular location is the virion membrane. It is found in the host cell membrane. It localises to the host endosome membrane. Functionally, oligomerizes in the host endoplasmic reticulum into predominantly trimers. In a second time, gp160 transits in the host Golgi, where glycosylation is completed. The precursor is then proteolytically cleaved in the trans-Golgi and thereby activated by cellular furin or furin-like proteases to produce gp120 and gp41. In terms of biological role, attaches the virus to the host lymphoid cell by binding to the primary receptor CD4. This interaction induces a structural rearrangement creating a high affinity binding site for a chemokine coreceptor like CXCR4 and/or CCR5. Acts as a ligand for CD209/DC-SIGN and CLEC4M/DC-SIGNR, which are respectively found on dendritic cells (DCs), and on endothelial cells of liver sinusoids and lymph node sinuses. These interactions allow capture of viral particles at mucosal surfaces by these cells and subsequent transmission to permissive cells. HIV subverts the migration properties of dendritic cells to gain access to CD4+ T-cells in lymph nodes. Virus transmission to permissive T-cells occurs either in trans (without DCs infection, through viral capture and transmission), or in cis (following DCs productive infection, through the usual CD4-gp120 interaction), thereby inducing a robust infection. In trans infection, bound virions remain infectious over days and it is proposed that they are not degraded, but protected in non-lysosomal acidic organelles within the DCs close to the cell membrane thus contributing to the viral infectious potential during DCs' migration from the periphery to the lymphoid tissues. On arrival at lymphoid tissues, intact virions recycle back to DCs' cell surface allowing virus transmission to CD4+ T-cells. Its function is as follows. Acts as a class I viral fusion protein. Under the current model, the protein has at least 3 conformational states: pre-fusion native state, pre-hairpin intermediate state, and post-fusion hairpin state. During fusion of viral and target intracellular membranes, the coiled coil regions (heptad repeats) assume a trimer-of-hairpins structure, positioning the fusion peptide in close proximity to the C-terminal region of the ectodomain. The formation of this structure appears to drive apposition and subsequent fusion of viral and target cell membranes. Complete fusion occurs in host cell endosomes and is dynamin-dependent, however some lipid transfer might occur at the plasma membrane. The virus undergoes clathrin-dependent internalization long before endosomal fusion, thus minimizing the surface exposure of conserved viral epitopes during fusion and reducing the efficacy of inhibitors targeting these epitopes. Membranes fusion leads to delivery of the nucleocapsid into the cytoplasm. The sequence is that of Envelope glycoprotein gp160 from Homo sapiens (Human).